We begin with the raw amino-acid sequence, 405 residues long: Cysteine desulfurase IscS (405 aa).

Pyridoxal 5'-phosphate-binding positions include 75-76 (AT), Asn156, Gln184, and 204-206 (SAH). Lys207 is subject to N6-(pyridoxal phosphate)lysine. Pyridoxal 5'-phosphate is bound at residue Thr244. Cys329 serves as the catalytic Cysteine persulfide intermediate. Position 329 (Cys329) interacts with [2Fe-2S] cluster.

It belongs to the class-V pyridoxal-phosphate-dependent aminotransferase family. NifS/IscS subfamily. In terms of assembly, homodimer. Forms a heterotetramer with IscU, interacts with other sulfur acceptors. Pyridoxal 5'-phosphate is required as a cofactor.

The protein localises to the cytoplasm. It carries out the reaction (sulfur carrier)-H + L-cysteine = (sulfur carrier)-SH + L-alanine. Its pathway is cofactor biosynthesis; iron-sulfur cluster biosynthesis. Master enzyme that delivers sulfur to a number of partners involved in Fe-S cluster assembly, tRNA modification or cofactor biosynthesis. Catalyzes the removal of elemental sulfur atoms from cysteine to produce alanine. Functions as a sulfur delivery protein for Fe-S cluster synthesis onto IscU, an Fe-S scaffold assembly protein, as well as other S acceptor proteins. The chain is Cysteine desulfurase IscS from Acinetobacter baumannii (strain SDF).